Here is a 1057-residue protein sequence, read N- to C-terminus: Self-sufficient cytochrome P450 monooxygenase CYP505E3 (1057 aa).

Cys403 contacts heme. The interval 465 to 488 (PSAAPFSSHARETTNASLPASPGT) is disordered. The Flavodoxin-like domain maps to 494–634 (MYVLYGSNTG…AFEAWETKLW (141 aa)). FMN-binding positions include 500-504 (SNTGT) and 578-610 (VFGC…QRLV). In terms of domain architecture, FAD-binding FR-type spans 671 to 900 (HDAALGTVIE…RASNAAFHLP (230 aa)).

This sequence in the N-terminal section; belongs to the cytochrome P450 family. The cofactor is FAD. FMN is required as a cofactor. Heme serves as cofactor.

It carries out the reaction 2 oxidized [cytochrome P450] + NADPH = 2 reduced [cytochrome P450] + NADP(+) + H(+). The catalysed reaction is an organic molecule + reduced [NADPH--hemoprotein reductase] + O2 = an alcohol + oxidized [NADPH--hemoprotein reductase] + H2O + H(+). It catalyses the reaction dodecan-1-ol + reduced [NADPH--hemoprotein reductase] + O2 = 1,5-dodecanediol + oxidized [NADPH--hemoprotein reductase] + H2O + H(+). The enzyme catalyses dodecan-1-ol + reduced [NADPH--hemoprotein reductase] + O2 = 1,6-dodecanediol + oxidized [NADPH--hemoprotein reductase] + H2O + H(+). Its function is as follows. Self-sufficient cytochrome P450 monooxygenase that catalyzes the regioselective in-chain hydroxylation of fatty alcohols (C9-15) as well as fatty acids (C9-15) at the omega-1 to omega-7 or omega-1 to omega-6 positions, respectively. Is also able to convert naphthalene to 1-naphthol and 1-naphthol further to 1,3-dihydroxynaphthalene. The protein is Self-sufficient cytochrome P450 monooxygenase CYP505E3 of Phanerodontia chrysosporium (White-rot fungus).